The primary structure comprises 201 residues: Cytochrome c oxidase assembly protein CtaG (201 aa).

Over 1–13 (MTDQGENEKKQRR) the chain is Cytoplasmic. A helical; Signal-anchor for type II membrane protein membrane pass occupies residues 14–36 (SNATIAVACLSFFVCMIGAAYAS). The Periplasmic segment spans residues 37–201 (VPLYRIFCQV…KAVGSTRNGG (165 aa)).

The protein belongs to the COX11/CtaG family.

It is found in the cell inner membrane. In terms of biological role, exerts its effect at some terminal stage of cytochrome c oxidase synthesis, probably by being involved in the insertion of the copper B into subunit I. This Brucella ovis (strain ATCC 25840 / 63/290 / NCTC 10512) protein is Cytochrome c oxidase assembly protein CtaG.